The following is a 518-amino-acid chain: Glutamate--cysteine ligase (518 aa).

It belongs to the glutamate--cysteine ligase type 1 family. Type 1 subfamily.

It carries out the reaction L-cysteine + L-glutamate + ATP = gamma-L-glutamyl-L-cysteine + ADP + phosphate + H(+). It participates in sulfur metabolism; glutathione biosynthesis; glutathione from L-cysteine and L-glutamate: step 1/2. In Shigella flexneri serotype 5b (strain 8401), this protein is Glutamate--cysteine ligase.